The chain runs to 126 residues: Histone H2B type 3-B (126 aa).

The span at methionine 1–lysine 12 shows a compositional bias: low complexity. The tract at residues methionine 1 to lysine 35 is disordered. Proline 2 is subject to N-acetylproline. Lysine 6 carries the post-translational modification N6-(2-hydroxyisobutyryl)lysine; alternate. Lysine 6 carries the post-translational modification N6-(beta-hydroxybutyryl)lysine; alternate. An N6-acetyllysine; alternate modification is found at lysine 6. Position 6 is an N6-butyryllysine; alternate (lysine 6). Lysine 6 is modified (N6-crotonyllysine; alternate). Lysine 6 bears the N6-lactoyllysine; alternate mark. A Glycyl lysine isopeptide (Lys-Gly) (interchain with G-Cter in SUMO2); alternate cross-link involves residue lysine 6. An ADP-ribosylserine modification is found at serine 7. Lysine 12 carries the post-translational modification N6-(beta-hydroxybutyryl)lysine; alternate. Residues lysine 12 and lysine 13 each carry the N6-acetyllysine; alternate modification. Residues lysine 12 and lysine 13 each carry the N6-crotonyllysine; alternate modification. At lysine 12 the chain carries N6-lactoyllysine; alternate. Lysine 13 is subject to N6-(2-hydroxyisobutyryl)lysine; alternate. Serine 15 bears the Phosphoserine; by STK4/MST1 mark. Lysine 16, lysine 17, lysine 21, and lysine 24 each carry N6-acetyllysine; alternate. 4 positions are modified to N6-crotonyllysine; alternate: lysine 16, lysine 17, lysine 21, and lysine 24. 4 positions are modified to N6-lactoyllysine; alternate: lysine 16, lysine 17, lysine 21, and lysine 24. N6-(beta-hydroxybutyryl)lysine; alternate occurs at positions 17 and 21. Lysine 17 bears the N6-glutaryllysine; alternate mark. N6-(2-hydroxyisobutyryl)lysine; alternate is present on residues lysine 21 and lysine 24. Lysine 21 is modified (N6-butyryllysine; alternate). Lysine 21 participates in a covalent cross-link: Glycyl lysine isopeptide (Lys-Gly) (interchain with G-Cter in SUMO2); alternate. Lysine 25 is subject to N6-(2-hydroxyisobutyryl)lysine. At lysine 35 the chain carries N6-(2-hydroxyisobutyryl)lysine; alternate. Lysine 35 carries the post-translational modification N6-(beta-hydroxybutyryl)lysine; alternate. N6-crotonyllysine; alternate is present on lysine 35. At lysine 35 the chain carries N6-glutaryllysine; alternate. Position 35 is an N6-succinyllysine; alternate (lysine 35). Residue lysine 35 forms a Glycyl lysine isopeptide (Lys-Gly) (interchain with G-Cter in ubiquitin); alternate linkage. A PolyADP-ribosyl glutamic acid modification is found at glutamate 36. Serine 37 carries the post-translational modification Phosphoserine; by AMPK. An N6-(2-hydroxyisobutyryl)lysine; alternate mark is found at lysine 44, lysine 47, and lysine 58. Lysine 44 carries the post-translational modification N6-lactoyllysine; alternate. Lysine 44 and lysine 47 each carry N6-glutaryllysine; alternate. Lysine 47 is modified (N6-methyllysine; alternate). Lysine 58 carries the N6,N6-dimethyllysine; alternate modification. A Dimethylated arginine modification is found at arginine 80. Lysine 86 bears the N6-(2-hydroxyisobutyryl)lysine; alternate mark. The residue at position 86 (lysine 86) is an N6-(beta-hydroxybutyryl)lysine; alternate. Position 86 is an N6-acetyllysine; alternate (lysine 86). Residue lysine 86 is modified to N6-lactoyllysine; alternate. The residue at position 86 (lysine 86) is an N6,N6,N6-trimethyllysine; alternate. Arginine 87 and arginine 93 each carry omega-N-methylarginine. The residue at position 109 (lysine 109) is an N6-(2-hydroxyisobutyryl)lysine; alternate. N6-lactoyllysine; alternate is present on lysine 109. Residue lysine 109 is modified to N6-glutaryllysine; alternate. An N6-methyllysine; alternate modification is found at lysine 109. Serine 113 carries an O-linked (GlcNAc) serine glycan. Threonine 116 is modified (phosphothreonine). Lysine 117 and lysine 121 each carry N6-(2-hydroxyisobutyryl)lysine; alternate. Residues lysine 117 and lysine 121 each carry the N6-(beta-hydroxybutyryl)lysine; alternate modification. Lysine 117 and lysine 121 each carry N6-lactoyllysine; alternate. An N6-glutaryllysine; alternate mark is found at lysine 117 and lysine 121. Lysine 117 and lysine 121 each carry N6-succinyllysine; alternate. Residue lysine 117 is modified to N6-malonyllysine; alternate. Lysine 117 bears the N6-methylated lysine; alternate mark. Residue lysine 121 forms a Glycyl lysine isopeptide (Lys-Gly) (interchain with G-Cter in ubiquitin); alternate linkage.

The protein belongs to the histone H2B family. As to quaternary structure, the nucleosome is a histone octamer containing two molecules each of H2A, H2B, H3 and H4 assembled in one H3-H4 heterotetramer and two H2A-H2B heterodimers. The octamer wraps approximately 147 bp of DNA. Post-translationally, monoubiquitination at Lys-35 (H2BK34Ub) by the MSL1/MSL2 dimer is required for histone H3 'Lys-4' (H3K4me) and 'Lys-79' (H3K79me) methylation and transcription activation at specific gene loci, such as HOXA9 and MEIS1 loci. Similarly, monoubiquitination at Lys-121 (H2BK120Ub) by the RNF20/40 complex gives a specific tag for epigenetic transcriptional activation and is also prerequisite for histone H3 'Lys-4' and 'Lys-79' methylation. It also functions cooperatively with the FACT dimer to stimulate elongation by RNA polymerase II. H2BK120Ub also acts as a regulator of mRNA splicing: deubiquitination by USP49 is required for efficient cotranscriptional splicing of a large set of exons. In terms of processing, phosphorylation at Ser-37 (H2BS36ph) by AMPK in response to stress promotes transcription. Phosphorylated on Ser-15 (H2BS14ph) by STK4/MST1 during apoptosis; which facilitates apoptotic chromatin condensation. Also phosphorylated on Ser-15 in response to DNA double strand breaks (DSBs), and in correlation with somatic hypermutation and immunoglobulin class-switch recombination. GlcNAcylation at Ser-113 promotes monoubiquitination of Lys-121. It fluctuates in response to extracellular glucose, and associates with transcribed genes. Post-translationally, ADP-ribosylated by PARP1 or PARP2 on Ser-7 (H2BS6ADPr) in response to DNA damage. H2BS6ADPr promotes recruitment of CHD1L. Poly ADP-ribosylation on Glu-36 (H2BE35ADPr) by PARP1 regulates adipogenesis: it inhibits phosphorylation at Ser-37 (H2BS36ph), thereby blocking expression of pro-adipogenetic genes. In terms of processing, crotonylation (Kcr) is specifically present in male germ cells and marks testis-specific genes in post-meiotic cells, including X-linked genes that escape sex chromosome inactivation in haploid cells. Crotonylation marks active promoters and enhancers and confers resistance to transcriptional repressors. It is also associated with post-meiotically activated genes on autosomes. Lactylated in macrophages by EP300/P300 by using lactoyl-CoA directly derived from endogenous or exogenous lactate, leading to stimulates gene transcription.

It is found in the nucleus. It localises to the chromosome. Core component of nucleosome. Nucleosomes wrap and compact DNA into chromatin, limiting DNA accessibility to the cellular machineries which require DNA as a template. Histones thereby play a central role in transcription regulation, DNA repair, DNA replication and chromosomal stability. DNA accessibility is regulated via a complex set of post-translational modifications of histones, also called histone code, and nucleosome remodeling. This Homo sapiens (Human) protein is Histone H2B type 3-B.